We begin with the raw amino-acid sequence, 746 residues long: Protein O-mannosyl-transferase 1 (746 aa).

7 helical membrane passes run 30-50, 90-110, 121-141, 144-164, 176-196, 228-248, and 266-286; these read PLVV…LGLL, FGHM…NFLW, VPIW…VPMA, IVLE…LMLI, LLES…LKFF, MGIF…WNLI, and IVAL…VHLM. MIR domains follow at residues 318–381, 392–449, and 453–513; these read PLEV…VKDP, PRPV…LDIV, and SNRD…VEEH. 3 N-linked (GlcNAc...) asparagine glycosylation sites follow: Asn435, Asn471, and Asn539. Helical transmembrane passes span 597-617, 636-656, and 660-680; these read IVIW…FFWY, WVLA…PFFL, and VLFL…LPIV.

It belongs to the glycosyltransferase 39 family.

Its subcellular location is the endoplasmic reticulum membrane. The enzyme catalyses a di-trans,poly-cis-dolichyl beta-D-mannosyl phosphate + L-seryl-[protein] = 3-O-(alpha-D-mannosyl)-L-seryl-[protein] + a di-trans,poly-cis-dolichyl phosphate + H(+). It carries out the reaction a di-trans,poly-cis-dolichyl beta-D-mannosyl phosphate + L-threonyl-[protein] = 3-O-(alpha-D-mannosyl)-L-threonyl-[protein] + a di-trans,poly-cis-dolichyl phosphate + H(+). It participates in protein modification; protein glycosylation. Functionally, transfers mannosyl residues to the hydroxyl group of serine or threonine residues. Coexpression of both POMT1 and POMT2 is necessary for enzyme activity, expression of either POMT1 or POMT2 alone is insufficient. Essentially dedicated to O-mannosylation of alpha-DAG1 and few other proteins but not of cadherins and protocaherins. In Mus musculus (Mouse), this protein is Protein O-mannosyl-transferase 1 (Pomt1).